We begin with the raw amino-acid sequence, 213 residues long: ATP-dependent Clp protease proteolytic subunit (213 aa).

The active-site Nucleophile is the Ser114. Residue His139 is part of the active site.

This sequence belongs to the peptidase S14 family. Fourteen ClpP subunits assemble into 2 heptameric rings which stack back to back to give a disk-like structure with a central cavity, resembling the structure of eukaryotic proteasomes.

It is found in the cytoplasm. The enzyme catalyses Hydrolysis of proteins to small peptides in the presence of ATP and magnesium. alpha-casein is the usual test substrate. In the absence of ATP, only oligopeptides shorter than five residues are hydrolyzed (such as succinyl-Leu-Tyr-|-NHMec, and Leu-Tyr-Leu-|-Tyr-Trp, in which cleavage of the -Tyr-|-Leu- and -Tyr-|-Trp bonds also occurs).. Cleaves peptides in various proteins in a process that requires ATP hydrolysis. Has a chymotrypsin-like activity. Plays a major role in the degradation of misfolded proteins. The protein is ATP-dependent Clp protease proteolytic subunit of Pseudomonas entomophila (strain L48).